Reading from the N-terminus, the 1052-residue chain is 3-hydroxy-3-methylglutaryl coenzyme A reductase mokG (1052 aa).

A run of 6 helical transmembrane segments spans residues 223–243, 253–273, 279–299, 349–369, 378–398, and 440–460; these read VDMAIIGLGYLALNMTLVSLF, FWLAASVLLSGAFAFVFGLGV, VPVDMLLLSEGIPFLVLTVGF, GWSIVQSYLLEIGALALGAVF, FCFLAAWMVLFDAILLFTFYA, and WKLIMVGGFVLFNVLQLSSFF. One can recognise an SSD domain in the interval 224–403; it reads DMAIIGLGYL…FTFYATILCV (180 aa). Positions 461–617 are linker; that stretch reads YRIMGGFMTN…FKANQAESLT (157 aa). Residues 571-594 form a disordered region; it reads APKESAAPAPPSSPASVPSAVPVP. The span at 584 to 594 shows a compositional bias: low complexity; sequence PASVPSAVPVP. The segment at 618-1044 is catalytic; that stretch reads DDELAELCLR…LVNAHMRHNR (427 aa). Catalysis depends on Glu734, which acts as the Charge relay system. The N-linked (GlcNAc...) asparagine glycan is linked to Asn798. Residues Lys867 and Asp943 each act as charge relay system in the active site. His1039 acts as the Proton donor in catalysis. Asn1043 carries an N-linked (GlcNAc...) asparagine glycan.

The protein belongs to the HMG-CoA reductase family.

It localises to the endoplasmic reticulum membrane. It catalyses the reaction (R)-mevalonate + 2 NADP(+) + CoA = (3S)-3-hydroxy-3-methylglutaryl-CoA + 2 NADPH + 2 H(+). It participates in polyketide biosynthesis; lovastatin biosynthesis. HMG-CoA reductase; part of the gene cluster that mediates the biosynthesis of monakolin K, also known as lovastatin, and which acts as a potent competitive inhibitor of HMG-CoA reductase. Monakolin K biosynthesis is performed in two stages. The first stage is catalyzed by the nonaketide synthase mokA, which belongs to type I polyketide synthases and catalyzes the iterative nine-step formation of the polyketide. This PKS stage is completed by the action of dehydrogenase mokE, which catalyzes the NADPH-dependent reduction of the unsaturated tetra-, penta- and heptaketide intermediates that arise during the mokA-mediated biosynthesis of the nonaketide chain and leads to dihydromonacolin L. Covalently bound dihydromonacolin L is released from mokA by the mokD esterase. Conversion of dihydromonacolin L into monacolin L and then monacolin J is subsequently performed with the participation of molecular oxygen and P450 monoogygenase mokC. Finally, mokF performs the conversion of monacoline J to monacoline K through the addition of the side-chain diketide moiety (2R)-2-methylbutanoate produced by the diketide synthase mokB. HMG-CoA reductase mokG may act as a down-regulator of monacolin K production. The protein is 3-hydroxy-3-methylglutaryl coenzyme A reductase mokG of Monascus pilosus (Red mold).